We begin with the raw amino-acid sequence, 239 residues long: Heptaprenylglyceryl phosphate synthase (239 aa).

Lysine 12 is a binding site for sn-glycerol 1-phosphate. Mg(2+) contacts are provided by aspartate 14 and threonine 40. Sn-glycerol 1-phosphate-binding positions include 159 to 164 (YLEYSG), glycine 189, and 209 to 210 (GN).

The protein belongs to the GGGP/HepGP synthase family. Group I subfamily. In terms of assembly, homodimer. Mg(2+) is required as a cofactor.

It carries out the reaction sn-glycerol 1-phosphate + all-trans-heptaprenyl diphosphate = 3-heptaprenyl-sn-glycero-1-phosphate + diphosphate. It participates in membrane lipid metabolism; glycerophospholipid metabolism. Prenyltransferase that catalyzes in vivo the transfer of the heptaprenyl moiety of heptaprenyl pyrophosphate (HepPP; 35 carbon atoms) to the C3 hydroxyl of sn-glycerol-1-phosphate (G1P), producing heptaprenylglyceryl phosphate (HepGP). This reaction is an ether-bond-formation step in the biosynthesis of archaea-type G1P-based membrane lipids found in Bacillales. To a much lesser extent, is also able to use geranylgeranyl diphosphate (GGPP; C20) as the prenyl donor. The protein is Heptaprenylglyceryl phosphate synthase of Geobacillus kaustophilus (strain HTA426).